Consider the following 166-residue polypeptide: Lutropin subunit beta (166 aa).

Residues 1-21 (MGGAQVLLLLTLLGTPLVTHG) form the signal peptide. 6 disulfide bridges follow: C56-C104, C70-C119, C73-C157, C81-C135, C85-C137, and C140-C147. The N-linked (GlcNAc...) asparagine glycan is linked to N60.

This sequence belongs to the glycoprotein hormones subunit beta family. Heterodimer of a common alpha chain and a unique beta chain which confers biological specificity to thyrotropin, lutropin, follitropin and gonadotropin.

The protein resides in the secreted. Its function is as follows. Promotes spermatogenesis and ovulation by stimulating the testes and ovaries to synthesize steroids. In Coturnix japonica (Japanese quail), this protein is Lutropin subunit beta (LHB).